A 976-amino-acid chain; its full sequence is Mast/stem cell growth factor receptor Kit (976 aa).

The first 25 residues, M1–S25, serve as a signal peptide directing secretion. The Extracellular segment spans residues Q26–P524. 5 Ig-like C2-type domains span residues P27–R112, D121–R205, P212–V308, P317–N410, and P413–A507. Residues C58 and C97 are joined by a disulfide bond. Residues N130 and N145 are each glycosylated (N-linked (GlcNAc...) asparagine). 3 disulfide bridges follow: C136–C186, C151–C183, and C233–C290. N-linked (GlcNAc...) asparagine glycans are attached at residues N283, N293, N300, N320, N352, N367, N463, and N486. A disulfide bond links C428 and C491. The helical transmembrane segment at L525–Y545 threads the bilayer. The Cytoplasmic segment spans residues K546 to V976. Phosphotyrosine; by autocatalysis is present on residues Y547, Y553, Y568, and Y570. Residue Y568 coordinates Mg(2+). The interval Y568–Y570 is important for interaction with phosphotyrosine-binding proteins. In terms of domain architecture, Protein kinase spans L589 to S937. Residues G596 to V603, K623, and E671 to D677 contribute to the ATP site. Residues Y703, Y721, and Y730 each carry the phosphotyrosine; by autocatalysis modification. S741 and S746 each carry phosphoserine; by PKC/PRKCA. D792 serves as the catalytic Proton acceptor. ATP is bound at residue R796. The Mg(2+) site is built by N797 and D810. Phosphoserine is present on S821. Y823 is subject to Phosphotyrosine; by autocatalysis. S891 bears the Phosphoserine mark. Residues Y900 and Y936 each carry the phosphotyrosine; by autocatalysis modification. S959 is modified (phosphoserine).

Belongs to the protein kinase superfamily. Tyr protein kinase family. CSF-1/PDGF receptor subfamily. In terms of assembly, monomer in the absence of bound KITLG/SCF. Homodimer in the presence of bound KITLG/SCF, forming a heterotetramer with two KITLG/SCF molecules. Interacts (via phosphorylated tyrosine residues) with the adapter proteins GRB2 and GRB7 (via SH2 domain), and SH2B2/APS. Interacts (via C-terminus) with MPDZ (via the tenth PDZ domain). Interacts (via phosphorylated tyrosine residues) with PIK3R1 and PIK3 catalytic subunit. Interacts (via phosphorylated tyrosine) with CRK (isoform Crk-II), FYN, SHC1 and MATK/CHK (via SH2 domain). Interacts with LYN and FES/FPS. Interacts (via phosphorylated tyrosine residues) with the protein phosphatases PTPN6/SHP-1 (via SH2 domain), PTPN11/SHP-2 (via SH2 domain) and PTPRU. Interacts with PLCG1. Interacts with DOK1 and TEC. Interacts (KITLG/SCF-bound) with IL1RL1. Interacts with IL1RAP (independent of stimulation with KITLG/SCF). A mast cell-specific KITLG/SCF-induced interleukin-33 signaling complex contains IL1RL1, IL1RAP, KIT and MYD88. In terms of processing, ubiquitinated by SOCS6. KIT is rapidly ubiquitinated after autophosphorylation induced by KITLG/SCF binding, leading to internalization and degradation. Autophosphorylated on tyrosine residues. KITLG/SCF binding enhances autophosphorylation. Isoform 1 shows low levels of tyrosine phosphorylation in the absence of added KITLG/SCF (in vitro). Kinase activity is down-regulated by phosphorylation on serine residues by protein kinase C family members. Phosphorylation at Tyr-568 is required for interaction with PTPN11/SHP-2, CRK (isoform Crk-II) and members of the SRC tyrosine-protein kinase family. Phosphorylation at Tyr-570 is required for interaction with PTPN6/SHP-1. Phosphorylation at Tyr-703, Tyr-823 and Tyr-936 is important for interaction with GRB2. Phosphorylation at Tyr-721 is important for interaction with PIK3R1. Phosphorylation at Tyr-823 and Tyr-936 is important for interaction with GRB7. In terms of tissue distribution, in testis, detected in spermatogonia in the basal layer and in interstitial Leydig cells but not in Sertoli cells or spermatocytes inside the seminiferous tubules (at protein level). Expression is maintained in ejaculated spermatozoa (at protein level).

The protein localises to the cell membrane. It is found in the cytoplasm. It catalyses the reaction L-tyrosyl-[protein] + ATP = O-phospho-L-tyrosyl-[protein] + ADP + H(+). Its activity is regulated as follows. Present in an inactive conformation in the absence of bound ligand. KITLG/SCF binding leads to dimerization and activation by autophosphorylation on tyrosine residues. Activity is down-regulated by PRKCA-mediated phosphorylation on serine residues. Inhibited by imatinib/STI-571 (Gleevec) and sunitinib; these compounds maintain the kinase in an inactive conformation. In terms of biological role, tyrosine-protein kinase that acts as a cell-surface receptor for the cytokine KITLG/SCF and plays an essential role in the regulation of cell survival and proliferation, hematopoiesis, stem cell maintenance, gametogenesis, mast cell development, migration and function, and in melanogenesis. In response to KITLG/SCF binding, KIT can activate several signaling pathways. Phosphorylates PIK3R1, PLCG1, SH2B2/APS and CBL. Activates the AKT1 signaling pathway by phosphorylation of PIK3R1, the regulatory subunit of phosphatidylinositol 3-kinase. Activated KIT also transmits signals via GRB2 and activation of RAS, RAF1 and the MAP kinases MAPK1/ERK2 and/or MAPK3/ERK1. Promotes activation of STAT family members STAT1, STAT3, STAT5A and STAT5B. Activation of PLCG1 leads to the production of the cellular signaling molecules diacylglycerol and inositol 1,4,5-trisphosphate. KIT signaling is modulated by protein phosphatases, and by rapid internalization and degradation of the receptor. Activated KIT promotes phosphorylation of the protein phosphatases PTPN6/SHP-1 and PTPRU, and of the transcription factors STAT1, STAT3, STAT5A and STAT5B. Promotes phosphorylation of PIK3R1, CBL, CRK (isoform Crk-II), LYN, MAPK1/ERK2 and/or MAPK3/ERK1, PLCG1, SRC and SHC1. The polypeptide is Mast/stem cell growth factor receptor Kit (KIT) (Homo sapiens (Human)).